Consider the following 308-residue polypeptide: Glutaminase 2 (308 aa).

Substrate-binding residues include serine 66, asparagine 117, glutamate 161, asparagine 168, tyrosine 192, tyrosine 244, and valine 262.

This sequence belongs to the glutaminase family. Homotetramer.

The catalysed reaction is L-glutamine + H2O = L-glutamate + NH4(+). This chain is Glutaminase 2, found in Escherichia coli O157:H7.